The following is a 1337-amino-acid chain: MDFTAQPKPATALCGVVSADGKIAYPPGVKEITDKITTDEMIKRLKMVVKTFMDMDQDSEDEKQQYLPLALHLASEFFLRNPNKDVRLLVACCLADIFRIYAPEAPYTSHDKLKDIFLFITRQLKGLEDTKSPQFNRYFYLLENLAWVKSYNICFELEDCNEIFIQLFRTLFSVINNSHNKKVQMHMLDLMSSIIMEGDGVTQELLDSILINLIPAHKNLNKQSFDLAKVLLKRTVQTIEACIANFFNQVLVLGRSSVSDLSEHVFDLIQELFAIDPHLLLSVMPQLEFKLKSNDGEERLAVVRLLAKLFGSKDSDLATQNRPLWQCFLGRFNDIHVPVRLESVKFASHCLMNHPDLAKDLTEYLKVRSHDPEEAIRHDVIVTIITAAKRDLALVNDQLLGFVRERTLDKRWRVRKEAMMGLAQLYKKYCLHGEAGKEAAEKVSWIKDKLLHIYYQNSIDDKLLVEKIFAQYLVPHNLETEERMKCLYYLYASLDPNAVKALNEMWKCQNMLRSHVRELLDLHKQPTSEANCSAMFGKLMTIAKNLPDPGKAQDFVKKFNQVLGDDEKLRSQLELLISPTCSCKQADICVREIARKLANPKQPTNPFLEMVKFLLERIAPVHIDSEAISALVKLMNKSIEGTADDEEEGVSPDTAIRSGLELLKVLSFTHPTSFHSAETYESLLQCLRMEDDKVAEAAIQIFRNTGHKIETDLPQIRSTLIPILHQKAKRGTPHQAKQAVHCIHAIFTNKEVQLAQIFEPLSRSLNADVPEQLITPLVSLGHISMLAPDQFASPMKSVVANFIVKDLLMNDRSTGEKNGKLWSPDEEVSPEVLAKVQAIKLLVRWLLGMKNNQSKSANSTLRLLSAMLVSEGDLTEQKRISKSDMSRLRLAAGSAIMKLAQEPCYHEIITPEQFQLCALVINDECYQVRQIFAQKLHKALVKLLLPLEYMAIFALCAKDPVKERRAHARQCLLKNISIRREYIKQNPMATEKLLSLLPEYVVPYMIHLLAHDPDFTRSQDVDQLRDIKECLWFMLEVLMTKNENNSHAFMKKMAENIKLTRDAQSPDESKTNEKLYTVCDVALCVINSKSALCNADSPKDPVLPMKFFTQPEKDFCNDKSYISEETRVLLLTGKPKPAGVLGAVNKPLSATGRKPYVRSTGTETGSNINVNSELNPSTGNRSREQSSEAAETGVSENEENPVRIISVTPVKNIDPVKNKEINSDQATQGNISSDRGKKRTVTAAGAENIQQKTDEKVDESGPPAPSKPRRGRRPKSESQGNATKNDDLNKPINKGRKRAAVGQESPGGLEAGNAKAPKLQDLAKKAAPAERQIDLQR.

N-acetylmethionine is present on Met1. Residues 393–429 (ALVNDQLLGFVRERTLDKRWRVRKEAMMGLAQLYKKY) form an HEAT repeat. Ser1097 carries the post-translational modification Phosphoserine. Residue Lys1146 is modified to N6-acetyllysine. The disordered stretch occupies residues 1150 to 1337 (ATGRKPYVRS…PAERQIDLQR (188 aa)). Over residues 1159–1180 (STGTETGSNINVNSELNPSTGN) the composition is skewed to polar residues. Ser1195 is subject to Phosphoserine. Thr1208 carries the post-translational modification Phosphothreonine. N6-acetyllysine is present on Lys1211. Residues 1223 to 1233 (SDQATQGNISS) show a composition bias toward polar residues. Position 1290 is an N6-acetyllysine (Lys1290). At Ser1305 the chain carries Phosphoserine. Residues 1321–1337 (DLAKKAAPAERQIDLQR) are compositionally biased toward basic and acidic residues.

This sequence belongs to the PDS5 family. As to quaternary structure, interacts with the cohesin complex. Interacts with WAPL (via FGF motifs) or CDCA5 (via the FGF motif); the interaction is direct, cohesin-dependent and competitive. Interacts with SMC3. Interacts with TP63. In terms of tissue distribution, highest level in colon. Low levels in lung, ovary, breast and kidney. Reduced level in renal tumor tissue. Isoform 2 is expressed in kidney.

It is found in the nucleus. Probable regulator of sister chromatid cohesion in mitosis which may stabilize cohesin complex association with chromatin. May couple sister chromatid cohesion during mitosis to DNA replication. Cohesion ensures that chromosome partitioning is accurate in both meiotic and mitotic cells and plays an important role in DNA repair. This is Sister chromatid cohesion protein PDS5 homolog A from Homo sapiens (Human).